Reading from the N-terminus, the 87-residue chain is uncharacterized protein (87 aa).

Positions 1–19 (MLVLQLAVLVTAVYAFVHA) are cleaved as a signal peptide. A helical transmembrane segment spans residues 51 to 71 (ILGFVFGVLGIVIAACAAGVY).

The protein to M.tuberculosis Rv0476.

Its subcellular location is the membrane. This is an uncharacterized protein from Mycobacterium leprae (strain TN).